Consider the following 221-residue polypeptide: Ras-related protein Rab-28 (221 aa).

S2 bears the N-acetylserine mark. Phosphoserine is present on S8. GTP-binding residues include G21, G24, K25, T26, S27, G38, K39, Y41, and T44. A Mg(2+)-binding site is contributed by T26. Residues 35–49 (ETFGKQYKQTIGLDF) are switch I. Positions 44 and 68 each coordinate Mg(2+). Positions 68–85 (DIGGQTIGGKMLDKYIYG) are switch II. G71, N129, K130, D132, A160, and K161 together coordinate GTP. C218 carries the post-translational modification Cysteine methyl ester. C218 is lipidated: S-farnesyl cysteine. Positions 219–221 (AVQ) are cleaved as a propeptide — removed in mature form.

It belongs to the small GTPase superfamily. Rab family. Interacts (prenylated form) with PDE6D; the interaction promotes RAB28 delivery to the photoreceptor outer segments. Interacts with KCNJ13; the interaction may facilitate cone outer segments phagocytosis. Interacts with RELA; the interaction contributes to RELA transport from cytoplasm to nucleus. Mg(2+) is required as a cofactor. In terms of processing, isoprenylated.

It localises to the cell membrane. The protein localises to the cytoplasm. The protein resides in the cytoskeleton. Its subcellular location is the cilium basal body. It is found in the nucleus. The enzyme catalyses GTP + H2O = GDP + phosphate + H(+). Its activity is regulated as follows. Regulated by guanine nucleotide exchange factors (GEFs) which promote the exchange of bound GDP for free GTP. Regulated by GTPase activating proteins (GAPs) which increase the GTP hydrolysis activity. Inhibited by GDP dissociation inhibitors (GDIs). The small GTPases Rab are key regulators of intracellular membrane trafficking, from the formation of transport vesicles to their fusion with membranes. Rabs cycle between an inactive GDP-bound form and an active GTP-bound form that is able to recruit to membranes different sets of downstream effectors directly responsible for vesicle formation, movement, tethering and fusion. RAB28 is required for shedding and phagocytosis of cone cell outer segments (OS) discs in the retina. Also participates in nuclear factor kappa-B p65/RELA nuclear transport in endothelial cells. The polypeptide is Ras-related protein Rab-28 (RAB28) (Bos taurus (Bovine)).